The sequence spans 510 residues: Bifunctional purine biosynthesis protein PurH (510 aa).

The MGS-like domain occupies 1 to 142; it reads MRALLSVSDK…KNYKDVMVLC (142 aa).

The protein belongs to the PurH family.

It carries out the reaction (6R)-10-formyltetrahydrofolate + 5-amino-1-(5-phospho-beta-D-ribosyl)imidazole-4-carboxamide = 5-formamido-1-(5-phospho-D-ribosyl)imidazole-4-carboxamide + (6S)-5,6,7,8-tetrahydrofolate. The enzyme catalyses IMP + H2O = 5-formamido-1-(5-phospho-D-ribosyl)imidazole-4-carboxamide. Its pathway is purine metabolism; IMP biosynthesis via de novo pathway; 5-formamido-1-(5-phospho-D-ribosyl)imidazole-4-carboxamide from 5-amino-1-(5-phospho-D-ribosyl)imidazole-4-carboxamide (10-formyl THF route): step 1/1. It functions in the pathway purine metabolism; IMP biosynthesis via de novo pathway; IMP from 5-formamido-1-(5-phospho-D-ribosyl)imidazole-4-carboxamide: step 1/1. The protein is Bifunctional purine biosynthesis protein PurH of Campylobacter jejuni (strain RM1221).